A 157-amino-acid chain; its full sequence is ATP synthase subunit b (157 aa).

A helical membrane pass occupies residues 1–21; that stretch reads MHFLDESFWLAISFIIFVYLI.

The protein belongs to the ATPase B chain family. F-type ATPases have 2 components, F(1) - the catalytic core - and F(0) - the membrane proton channel. F(1) has five subunits: alpha(3), beta(3), gamma(1), delta(1), epsilon(1). F(0) has three main subunits: a(1), b(2) and c(10-14). The alpha and beta chains form an alternating ring which encloses part of the gamma chain. F(1) is attached to F(0) by a central stalk formed by the gamma and epsilon chains, while a peripheral stalk is formed by the delta and b chains.

The protein resides in the cell inner membrane. F(1)F(0) ATP synthase produces ATP from ADP in the presence of a proton or sodium gradient. F-type ATPases consist of two structural domains, F(1) containing the extramembraneous catalytic core and F(0) containing the membrane proton channel, linked together by a central stalk and a peripheral stalk. During catalysis, ATP synthesis in the catalytic domain of F(1) is coupled via a rotary mechanism of the central stalk subunits to proton translocation. Functionally, component of the F(0) channel, it forms part of the peripheral stalk, linking F(1) to F(0). The protein is ATP synthase subunit b of Rickettsia bellii (strain RML369-C).